The chain runs to 401 residues: Chorismate synthase (401 aa).

Arginine 40 and arginine 46 together coordinate NADP(+). FMN is bound by residues 135–137 (RAS), 256–257 (QA), glycine 300, 315–319 (KPIST), and arginine 341.

It belongs to the chorismate synthase family. As to quaternary structure, homotetramer. The cofactor is FMNH2.

It carries out the reaction 5-O-(1-carboxyvinyl)-3-phosphoshikimate = chorismate + phosphate. It participates in metabolic intermediate biosynthesis; chorismate biosynthesis; chorismate from D-erythrose 4-phosphate and phosphoenolpyruvate: step 7/7. Functionally, catalyzes the anti-1,4-elimination of the C-3 phosphate and the C-6 proR hydrogen from 5-enolpyruvylshikimate-3-phosphate (EPSP) to yield chorismate, which is the branch point compound that serves as the starting substrate for the three terminal pathways of aromatic amino acid biosynthesis. This reaction introduces a second double bond into the aromatic ring system. In Mycobacterium avium (strain 104), this protein is Chorismate synthase.